Consider the following 854-residue polypeptide: MSRKRSTKPKPAAKIALKKENDQFLEALKLYEGKQYKKSLKLLDAILKKDGSHVDSLALKGLDLYSVGEKDDAASYVANAIRKIEGASASPICCHVLGIYMRNTKEYKESIKWFTAALNNGSTNKQIYRDLATLQSQIGDFKNALVSRKKYWEAFLGYRANWTSLAVAQDVNGERQQAINTLSQFEKLAEGKISDSEKYEHSECLMYKNDIMYKAASDNQDKLQNVLKHLNDIEPCVFDKFGLLERKATIYMKLGQLKDASIVYRTLIKRNPDNFKYYKLLEVSLGIQGDNKLKKALYGKLEQFYPRCEPPKFIPLTFLQDKEELSKKLREYVLPQLERGVPATFSNVKPLYQRRKSKVSPLLEKIVLDYLSGLDPTQDPIPFIWTNYYLSQHFLFLKDFPKAQEYIDAALDHTPTLVEFYILKARILKHLGLMDTAAGILEEGRQLDLQDRFINCKTVKYFLRANNIDKAVEVASLFTKNDDSVNGIKDLHLVEASWFIVEQAEAYYRLYLDRKKKLDDLASLKKEVESDKSEQIANDIKENQWLVRKYKGLALKRFNAIPKFYKQFEDDQLDFHSYCMRKGTPRAYLEMLEWGKALYTKPMYVRAMKEASKLYFQMHDDRLKRKSDSLDENSDEIQNNGQNSSSQKKKAKKEAAAMNKRKETEAKSVAAYPSDQDNDVFGEKLIETSTPMEDFATEFYNNYSMQVREDERDYILDFEFNYRIGKLALCFASLNKFAKRFGTTSGLFGSMAIVLLHATRNDTPFDPILKKVVTKSLEKEYSENFPLNEISNNSFDWLNFYQEKFGKNDINGLLFLYRYRDDVPIGSSNLKEMIISSLSPLEPHSQNEILQYYL.

Residue Ser2 is modified to N-acetylserine. TPR repeat units follow at residues 20–53 (ENDQ…DGSH), 54–87 (VDSL…IEGA), 91–124 (PICC…GSTN), 126–162 (QIYR…RANW), 241–274 (FGLL…NPDN), 384–417 (IWTN…TPTL), and 452–485 (RFIN…DDSV). Residues 623–667 (LKRKSDSLDENSDEIQNNGQNSSSQKKKAKKEAAAMNKRKETEAK) are a coiled coil. A disordered region spans residues 626–668 (KSDSLDENSDEIQNNGQNSSSQKKKAKKEAAAMNKRKETEAKS). Ser674 is subject to Phosphoserine. A TPR 8 repeat occupies 728–761 (ALCFASLNKFAKRFGTTSGLFGSMAIVLLHATRN).

Component of the N-terminal acetyltransferase A (NatA) complex, which is composed of ARD1, NAT1 and NAT5. Can self-associate. NAT1 associates with the nascent polypeptide chain and the ribosome. In terms of processing, the N-terminus is blocked.

It localises to the cytoplasm. Non-catalytic component of the NatA N-terminal acetyltransferase, which catalyzes acetylation of proteins beginning with Met-Ser, Met-Gly and Met-Ala. N-acetylation plays a role in normal eukaryotic translation and processing, protect against proteolytic degradation and protein turnover. NAT1 anchors ARD1 and NAT5 to the ribosome and may present the N termini of nascent polypeptides for acetylation. The protein is N-terminal acetyltransferase A complex subunit NAT1 (NAT1) of Saccharomyces cerevisiae (strain ATCC 204508 / S288c) (Baker's yeast).